The primary structure comprises 493 residues: Guanosine-5'-triphosphate,3'-diphosphate pyrophosphatase (493 aa).

It belongs to the GppA/Ppx family. GppA subfamily.

The enzyme catalyses guanosine 3'-diphosphate 5'-triphosphate + H2O = guanosine 3',5'-bis(diphosphate) + phosphate + H(+). The protein operates within purine metabolism; ppGpp biosynthesis; ppGpp from GTP: step 2/2. Functionally, catalyzes the conversion of pppGpp to ppGpp. Guanosine pentaphosphate (pppGpp) is a cytoplasmic signaling molecule which together with ppGpp controls the 'stringent response', an adaptive process that allows bacteria to respond to amino acid starvation, resulting in the coordinated regulation of numerous cellular activities. This is Guanosine-5'-triphosphate,3'-diphosphate pyrophosphatase from Salmonella heidelberg (strain SL476).